The following is a 480-amino-acid chain: UDP-N-acetylmuramate--L-alanine ligase (480 aa).

An ATP-binding site is contributed by 127–133; it reads GTHGKTT.

This sequence belongs to the MurCDEF family.

Its subcellular location is the cytoplasm. It carries out the reaction UDP-N-acetyl-alpha-D-muramate + L-alanine + ATP = UDP-N-acetyl-alpha-D-muramoyl-L-alanine + ADP + phosphate + H(+). It participates in cell wall biogenesis; peptidoglycan biosynthesis. Cell wall formation. The sequence is that of UDP-N-acetylmuramate--L-alanine ligase from Blochmanniella floridana.